The following is a 135-amino-acid chain: Auxin-responsive protein SAUR66 (135 aa).

It belongs to the ARG7 family.

It is found in the cell membrane. Its function is as follows. May promote auxin-stimulated organ elongation, such as hypocotyls, stamen filaments and petals. This chain is Auxin-responsive protein SAUR66, found in Arabidopsis thaliana (Mouse-ear cress).